The primary structure comprises 451 residues: Interferon-related developmental regulator 1 (451 aa).

A compositionally biased stretch (basic residues) spans 1–10 (MPKNKKRNTP). Positions 1–69 (MPKNKKRNTP…PSSFAEDGPE (69 aa)) are disordered. Low complexity predominate over residues 23–33 (AAAATAATAGG). A compositionally biased stretch (polar residues) spans 49-61 (ETMSHCSGYSDPS).

Belongs to the IFRD family. Interacts with PSIP1/LEDGF. In terms of tissue distribution, expressed in a variety of tissues.

Could play a role in regulating gene activity in the proliferative and/or differentiative pathways induced by NGF. May be an autocrine factor that attenuates or amplifies the initial ligand-induced signal. The sequence is that of Interferon-related developmental regulator 1 (IFRD1) from Homo sapiens (Human).